Reading from the N-terminus, the 137-residue chain is MLQPKRTKFRKVHKGRNTGLAHRGSTVSFGSIAIKATERGRMTARQIEAARRAISRRIKRGGKIFIRVFPDKPITEKPLEVRMGNGKGNVEYWVCEIKPGKILYEIEGVNEDLAREAFALAAAKLPFKTTIVTRTVM.

Belongs to the universal ribosomal protein uL16 family. As to quaternary structure, part of the 50S ribosomal subunit.

Its function is as follows. Binds 23S rRNA and is also seen to make contacts with the A and possibly P site tRNAs. The protein is Large ribosomal subunit protein uL16 of Acinetobacter baumannii (strain SDF).